We begin with the raw amino-acid sequence, 218 residues long: uncharacterized protein (218 aa).

In terms of domain architecture, ACT spans Gly-4–Gly-83.

This is an uncharacterized protein from Methanocaldococcus jannaschii (strain ATCC 43067 / DSM 2661 / JAL-1 / JCM 10045 / NBRC 100440) (Methanococcus jannaschii).